Consider the following 437-residue polypeptide: ATP-dependent RNA helicase RhlB (437 aa).

The Q motif motif lies at 9 to 37 (KKFADFPLHKEVQQALNEVGFEFCTPIQA). One can recognise a Helicase ATP-binding domain in the interval 40–219 (LPILLAKKDI…YDHMNEPEKV (180 aa)). 53-60 (AQTGTGKT) is an ATP binding site. The short motif at 165 to 168 (DEAD) is the DEAD box element. Positions 243 to 390 (KMPLLLSLLE…VTSYDSEALL (148 aa)) constitute a Helicase C-terminal domain. A disordered region spans residues 394 to 437 (PAPKRIHRKPSSHSRNSRDRSGSRPQGGHRGNAPRRHDKTRRHS). Basic residues predominate over residues 425–437 (NAPRRHDKTRRHS).

Belongs to the DEAD box helicase family. RhlB subfamily. As to quaternary structure, component of the RNA degradosome, which is a multiprotein complex involved in RNA processing and mRNA degradation.

It is found in the cytoplasm. It carries out the reaction ATP + H2O = ADP + phosphate + H(+). In terms of biological role, DEAD-box RNA helicase involved in RNA degradation. Has RNA-dependent ATPase activity and unwinds double-stranded RNA. The sequence is that of ATP-dependent RNA helicase RhlB from Shewanella piezotolerans (strain WP3 / JCM 13877).